Reading from the N-terminus, the 670-residue chain is Beta-lactam-inducible penicillin-binding protein (670 aa).

Residues 4–24 form a helical membrane-spanning segment; the sequence is IKIVPLILIVVVVGFGIYFYA. The a penicillin site is built by Ser25 and Ser405. Ser405 acts as the Acyl-ester intermediate in catalysis.

Belongs to the transpeptidase family.

The protein resides in the cell membrane. In Staphylococcus aureus, this protein is Beta-lactam-inducible penicillin-binding protein (pbp).